The sequence spans 97 residues: Large ribosomal subunit protein uL23 (97 aa).

Belongs to the universal ribosomal protein uL23 family. As to quaternary structure, part of the 50S ribosomal subunit. Contacts protein L29, and trigger factor when it is bound to the ribosome.

Functionally, one of the early assembly proteins it binds 23S rRNA. One of the proteins that surrounds the polypeptide exit tunnel on the outside of the ribosome. Forms the main docking site for trigger factor binding to the ribosome. This chain is Large ribosomal subunit protein uL23, found in Brucella canis (strain ATCC 23365 / NCTC 10854 / RM-666).